The sequence spans 130 residues: Small ribosomal subunit protein uS9 (130 aa).

This sequence belongs to the universal ribosomal protein uS9 family.

The sequence is that of Small ribosomal subunit protein uS9 from Yersinia enterocolitica serotype O:8 / biotype 1B (strain NCTC 13174 / 8081).